A 366-amino-acid chain; its full sequence is Dihydroflavonol 4-reductase (366 aa).

The NADP(+) site is built by K45 and Y164.

The protein belongs to the NAD(P)-dependent epimerase/dehydratase family. Dihydroflavonol-4-reductase subfamily.

The catalysed reaction is a (2R,3S,4S)-leucoanthocyanidin + NADP(+) = a (2R,3R)-dihydroflavonol + NADPH + H(+). It catalyses the reaction (2S)-flavan-4-ol + NADP(+) = (2S)-flavanone + NADPH + H(+). The protein operates within pigment biosynthesis; anthocyanin biosynthesis. In terms of biological role, bifunctional enzyme involved in flavonoid metabolism. The protein is Dihydroflavonol 4-reductase (DFR) of Gerbera hybrida (Daisy).